The chain runs to 79 residues: D-alanyl carrier protein (79 aa).

The Carrier domain maps to 1–77 (MDVKETILNI…KIISGVVELM (77 aa)). The residue at position 35 (S35) is an O-(pantetheine 4'-phosphoryl)serine.

Belongs to the DltC family. Post-translationally, 4'-phosphopantetheine is transferred from CoA to a specific serine of apo-DCP.

The protein localises to the cytoplasm. The protein operates within cell wall biogenesis; lipoteichoic acid biosynthesis. Functionally, carrier protein involved in the D-alanylation of lipoteichoic acid (LTA). The loading of thioester-linked D-alanine onto DltC is catalyzed by D-alanine--D-alanyl carrier protein ligase DltA. The DltC-carried D-alanyl group is further transferred to cell membrane phosphatidylglycerol (PG) by forming an ester bond, probably catalyzed by DltD. D-alanylation of LTA plays an important role in modulating the properties of the cell wall in Gram-positive bacteria, influencing the net charge of the cell wall. The protein is D-alanyl carrier protein of Streptococcus suis (strain 98HAH33).